We begin with the raw amino-acid sequence, 432 residues long: FAD-dependent monooxygenase pynG (432 aa).

The FAD site is built by glutamate 32, arginine 103, aspartate 315, and alanine 328.

This sequence belongs to the paxM FAD-dependent monooxygenase family. FAD is required as a cofactor.

Its pathway is secondary metabolite biosynthesis. Its function is as follows. FAD-dependent monooxygenase; part of the gene cluster that mediates the biosynthesis of pyranonigrins, a family of antioxidative compounds. The first step of pyranonigrins biosynthesis is performed by the hybrid PKS-NRPS synthetase that condenses 6 malonyl-CoA units to an acetyl starter unit, to form a 1,3,5-trioxotetradecane-6,8-dienyl-ACP. The enoyl reductase (ER) domain of pynA is likely to be functional during the first two rounds of polyketide chain extension, to generate the saturated C-C bonds of the alkyl side chain. PynA subsequently forms the amide bond between the acyl chain and L-serine. Although pynA has a terminal reductase domain, it appears to require the thioesterase pynI for the release of the straight-chain intermediate from pynA via the formation of a tetramic acid pyranonigrin J. The methyltransferase pynC then coverts pyranonigrin J to pyranonigrin I via N-methylation. The FAD-dependent monooxygenase pynG catalyzes an epoxidation-mediated cyclization to form the dihydro-gamma-pyrone moiety, followed by pynD-catalyzed oxidation of the alcohol to the ketone and enolization to yield the characteristic tetramic acid-fused gamma-pyrone core of pyranonigrin H. Pyranonigrin H is substrate of pynH for dehydration-mediated exo-methylene formation from the serine side chain to produce pyranonigrin E, before the oxidase pynE reduces the exo-methylene of pyranonigrin E into a pendant methyl to form pyranonigrin G. The FAD-linked oxidoreductase pynB performs the reverse reaction and converts pyranonigrin G back to pyranonigrin E. The protein is FAD-dependent monooxygenase pynG of Aspergillus niger (strain ATCC MYA-4892 / CBS 513.88 / FGSC A1513).